The chain runs to 659 residues: Acetyl-coenzyme A synthetase (659 aa).

The disordered stretch occupies residues 1–35 (MATEQTKGQSSESISSVLSERRKFPPPEAFSSQSH). Residues 205–208 (RRGS), Thr-323, and Asn-347 each bind CoA. ATP-binding positions include 399–401 (GEP), 423–428 (DTWWQT), Asp-512, and Arg-527. A CoA-binding site is contributed by Ser-535. Arg-538 is an ATP binding site. Positions 549, 551, and 554 each coordinate Mg(2+). Residue Lys-621 is modified to N6-acetyllysine.

This sequence belongs to the ATP-dependent AMP-binding enzyme family. Requires Mg(2+) as cofactor. In terms of processing, acetylated. Deacetylation by the SIR2-homolog deacetylase activates the enzyme.

It catalyses the reaction acetate + ATP + CoA = acetyl-CoA + AMP + diphosphate. In terms of biological role, catalyzes the conversion of acetate into acetyl-CoA (AcCoA), an essential intermediate at the junction of anabolic and catabolic pathways. AcsA undergoes a two-step reaction. In the first half reaction, AcsA combines acetate with ATP to form acetyl-adenylate (AcAMP) intermediate. In the second half reaction, it can then transfer the acetyl group from AcAMP to the sulfhydryl group of CoA, forming the product AcCoA. The sequence is that of Acetyl-coenzyme A synthetase from Chlorobaculum tepidum (strain ATCC 49652 / DSM 12025 / NBRC 103806 / TLS) (Chlorobium tepidum).